Here is a 426-residue protein sequence, read N- to C-terminus: Enolase (426 aa).

Position 165 (Gln-165) interacts with (2R)-2-phosphoglycerate. Glu-209 (proton donor) is an active-site residue. Mg(2+) is bound by residues Asp-244, Glu-287, and Asp-313. Residues Lys-338, Arg-367, Ser-368, and Lys-389 each contribute to the (2R)-2-phosphoglycerate site. Lys-338 serves as the catalytic Proton acceptor.

Belongs to the enolase family. It depends on Mg(2+) as a cofactor.

The protein resides in the cytoplasm. The protein localises to the secreted. It is found in the cell surface. The catalysed reaction is (2R)-2-phosphoglycerate = phosphoenolpyruvate + H2O. Its pathway is carbohydrate degradation; glycolysis; pyruvate from D-glyceraldehyde 3-phosphate: step 4/5. Functionally, catalyzes the reversible conversion of 2-phosphoglycerate (2-PG) into phosphoenolpyruvate (PEP). It is essential for the degradation of carbohydrates via glycolysis. The sequence is that of Enolase from Methanococcus vannielii (strain ATCC 35089 / DSM 1224 / JCM 13029 / OCM 148 / SB).